We begin with the raw amino-acid sequence, 165 residues long: Large ribosomal subunit protein uL11 (165 aa).

It belongs to the universal ribosomal protein uL11 family. As to quaternary structure, part of the ribosomal stalk of the 50S ribosomal subunit. Interacts with L10 and the large rRNA to form the base of the stalk. L10 forms an elongated spine to which L12 dimers bind in a sequential fashion forming a multimeric L10(L12)X complex.

In terms of biological role, forms part of the ribosomal stalk which helps the ribosome interact with GTP-bound translation factors. This Thermococcus kodakarensis (strain ATCC BAA-918 / JCM 12380 / KOD1) (Pyrococcus kodakaraensis (strain KOD1)) protein is Large ribosomal subunit protein uL11.